The following is a 145-amino-acid chain: AN1-type zinc finger protein 2A (145 aa).

AN1-type zinc fingers lie at residues 4–52 and 94–142; these read PDLG…QKDV and KIFT…RPTI. Residues Cys10, Cys15, Cys25, Cys28, Cys33, His36, His42, Cys44, Cys100, Cys105, Cys115, Cys118, Cys123, His126, His132, and Cys134 each coordinate Zn(2+).

Its subcellular location is the cytoplasm. It is found in the nucleus. In Homo sapiens (Human), this protein is AN1-type zinc finger protein 2A (ZFAND2A).